Reading from the N-terminus, the 99-residue chain is Protein dpy-30 homolog (99 aa).

Residue M1 is modified to N-acetylmethionine. The disordered stretch occupies residues 1 to 26 (MEPEQMLEGQTQVAENPHSEYGLTDN). S19 carries the phosphoserine modification. K35 is subject to N6-acetyllysine; alternate. A Glycyl lysine isopeptide (Lys-Gly) (interchain with G-Cter in SUMO2); alternate cross-link involves residue K35.

It belongs to the dpy-30 family. In terms of assembly, homodimer. Core component of several methyltransferase-containing complexes including MLL1/MLL, MLL2/3 (also named ASCOM complex) and MLL4/WBP7. Each complex is at least composed of ASH2L, RBBP5, WDR5, DPY30, one or more specific histone methyltransferases (KMT2A/MLL1, KMT2D/MLL2, KMT2C/MLL3 and KMT2B/MLL4), and the facultative components MEN1, HCFC1, HCFC2, NCOA6, KDM6A, PAXIP1/PTIP, PAGR1 and alpha- and beta-tubulin. Interacts with ASH2L; the interaction is direct. Interacts with ARFGEF1. Component of the SET1 complex, at least composed of the catalytic subunit (SETD1A or SETD1B), WDR5, WDR82, RBBP5, ASH2L/ASH2, CXXC1/CFP1, HCFC1 and DPY30.

Its subcellular location is the nucleus. The protein localises to the golgi apparatus. It localises to the trans-Golgi network. Its function is as follows. As part of the MLL1/MLL complex, involved in the methylation of histone H3 at 'Lys-4', particularly trimethylation. Histone H3 'Lys-4' methylation represents a specific tag for epigenetic transcriptional activation. May play some role in histone H3 acetylation. In embryonic stem cells, may play a crucial role in retinoic acid-induced differentiation along the neural lineage, regulating gene induction and H3 'Lys-4' methylation at key developmental loci. May also play an indirect or direct role in endosomal transport. In Bos taurus (Bovine), this protein is Protein dpy-30 homolog (DPY30).